Here is a 300-residue protein sequence, read N- to C-terminus: Homoserine kinase (300 aa).

Position 87 to 97 (87 to 97 (PISRGLGSSSA)) interacts with ATP.

This sequence belongs to the GHMP kinase family. Homoserine kinase subfamily.

Its subcellular location is the cytoplasm. The catalysed reaction is L-homoserine + ATP = O-phospho-L-homoserine + ADP + H(+). Its pathway is amino-acid biosynthesis; L-threonine biosynthesis; L-threonine from L-aspartate: step 4/5. Its function is as follows. Catalyzes the ATP-dependent phosphorylation of L-homoserine to L-homoserine phosphate. The protein is Homoserine kinase of Clostridium kluyveri (strain ATCC 8527 / DSM 555 / NBRC 12016 / NCIMB 10680 / K1).